We begin with the raw amino-acid sequence, 469 residues long: Ribulose bisphosphate carboxylase large chain (469 aa).

Residues 1–2 (MS) constitute a propeptide that is removed on maturation. Pro-3 carries the N-acetylproline modification. Lys-14 carries the N6,N6,N6-trimethyllysine modification. Substrate is bound by residues Asn-123 and Thr-173. The active-site Proton acceptor is the Lys-175. Lys-177 contacts substrate. Mg(2+)-binding residues include Lys-201, Asp-203, and Glu-204. Lys-201 is subject to N6-carboxylysine. The Proton acceptor role is filled by His-294. Substrate contacts are provided by Arg-295, His-327, and Ser-379.

This sequence belongs to the RuBisCO large chain family. Type I subfamily. Heterohexadecamer of 8 large chains and 8 small chains; disulfide-linked. The disulfide link is formed within the large subunit homodimers. Mg(2+) is required as a cofactor. The disulfide bond which can form in the large chain dimeric partners within the hexadecamer appears to be associated with oxidative stress and protein turnover.

The protein resides in the plastid. Its subcellular location is the chloroplast. The enzyme catalyses 2 (2R)-3-phosphoglycerate + 2 H(+) = D-ribulose 1,5-bisphosphate + CO2 + H2O. It catalyses the reaction D-ribulose 1,5-bisphosphate + O2 = 2-phosphoglycolate + (2R)-3-phosphoglycerate + 2 H(+). Its function is as follows. RuBisCO catalyzes two reactions: the carboxylation of D-ribulose 1,5-bisphosphate, the primary event in carbon dioxide fixation, as well as the oxidative fragmentation of the pentose substrate in the photorespiration process. Both reactions occur simultaneously and in competition at the same active site. The protein is Ribulose bisphosphate carboxylase large chain of Brexia madagascariensis.